A 148-amino-acid polypeptide reads, in one-letter code: NADPH-dependent 7-cyano-7-deazaguanine reductase (148 aa).

Cys-50 functions as the Thioimide intermediate in the catalytic mechanism. Asp-57 acts as the Proton donor in catalysis. Residues 72 to 74 (VES) and 91 to 92 (HE) each bind substrate.

It belongs to the GTP cyclohydrolase I family. QueF type 1 subfamily.

The protein localises to the cytoplasm. It catalyses the reaction 7-aminomethyl-7-carbaguanine + 2 NADP(+) = 7-cyano-7-deazaguanine + 2 NADPH + 3 H(+). The protein operates within tRNA modification; tRNA-queuosine biosynthesis. Catalyzes the NADPH-dependent reduction of 7-cyano-7-deazaguanine (preQ0) to 7-aminomethyl-7-deazaguanine (preQ1). The protein is NADPH-dependent 7-cyano-7-deazaguanine reductase of Helicobacter pylori (strain HPAG1).